We begin with the raw amino-acid sequence, 403 residues long: E2F transcription factor-like E2FE (403 aa).

A DNA-binding region spans residues 34-99 (RKQKSLGLLC…RAKNQYTWKG (66 aa)). The interval 128–167 (VKGSDDEDDDEESSQPHSSSQTDSSKPGSLPQSSDPSKID) is disordered. Low complexity predominate over residues 142-152 (QPHSSSQTDSS). The segment covering 153 to 163 (KPGSLPQSSDP) has biased composition (polar residues). The DNA-binding element occupies 169–250 (RREKSLGLLT…SRKPAFKWLG (82 aa)). Residues 282–319 (VKRSKSSSSSQENATERRLKMKKHSTPESSYNKSFDVH) are disordered.

Belongs to the E2F/DP family. As to expression, expressed exclusively in mitotically dividing cells. Highly expressed in young leaves and mature flowers. Lower expression in young stalk and in young and mature flowers.

The protein localises to the nucleus. In terms of biological role, inhibitor of E2F-dependent activation of gene expression. Binds specifically the E2 recognition site without interacting with DP proteins and prevents transcription activation by E2F/DP heterodimers. Controls the timing of endocycle onset and inhibits endoreduplication. The sequence is that of E2F transcription factor-like E2FE (E2FE) from Arabidopsis thaliana (Mouse-ear cress).